The sequence spans 259 residues: Flap endonuclease Xni (259 aa).

Asp-109 is a Mg(2+) binding site. A 5'-3' exonuclease domain is found at 165–255; sequence VTPAQLTDYW…FNLQDIRFNS (91 aa). Leu-176, Pro-185, Val-187, and Ile-190 together coordinate K(+). The tract at residues 189–194 is interaction with DNA; that stretch reads GIGPKA.

The protein belongs to the Xni family. It depends on Mg(2+) as a cofactor. K(+) serves as cofactor.

Its function is as follows. Has flap endonuclease activity. During DNA replication, flap endonucleases cleave the 5'-overhanging flap structure that is generated by displacement synthesis when DNA polymerase encounters the 5'-end of a downstream Okazaki fragment. The protein is Flap endonuclease Xni of Vibrio cholerae serotype O1 (strain ATCC 39315 / El Tor Inaba N16961).